A 192-amino-acid polypeptide reads, in one-letter code: Large ribosomal subunit protein uL5 (192 aa).

Belongs to the universal ribosomal protein uL5 family. As to quaternary structure, part of the 50S ribosomal subunit; part of the 5S rRNA/L5/L18/L25 subcomplex. Contacts the 5S rRNA and the P site tRNA. Forms a bridge to the 30S subunit in the 70S ribosome.

This is one of the proteins that bind and probably mediate the attachment of the 5S RNA into the large ribosomal subunit, where it forms part of the central protuberance. In the 70S ribosome it contacts protein S13 of the 30S subunit (bridge B1b), connecting the 2 subunits; this bridge is implicated in subunit movement. Contacts the P site tRNA; the 5S rRNA and some of its associated proteins might help stabilize positioning of ribosome-bound tRNAs. The chain is Large ribosomal subunit protein uL5 from Sphingopyxis alaskensis (strain DSM 13593 / LMG 18877 / RB2256) (Sphingomonas alaskensis).